The sequence spans 338 residues: Dihydroorotate dehydrogenase (quinone) (338 aa).

FMN contacts are provided by residues 68-72 (AGMDK) and Thr92. Lys72 is a binding site for substrate. Position 117 to 121 (117 to 121 (NRMGF)) interacts with substrate. Residues Ser147 and Asn180 each coordinate FMN. Asn180 is a binding site for substrate. Ser183 acts as the Nucleophile in catalysis. Asn185 is a binding site for substrate. Residues Lys214 and Thr242 each coordinate FMN. 243–244 (NT) serves as a coordination point for substrate. Residues Gly267, Gly296, and 317–318 (YT) each bind FMN.

The protein belongs to the dihydroorotate dehydrogenase family. Type 2 subfamily. In terms of assembly, monomer. FMN serves as cofactor.

It is found in the cell membrane. It carries out the reaction (S)-dihydroorotate + a quinone = orotate + a quinol. It participates in pyrimidine metabolism; UMP biosynthesis via de novo pathway; orotate from (S)-dihydroorotate (quinone route): step 1/1. Functionally, catalyzes the conversion of dihydroorotate to orotate with quinone as electron acceptor. The sequence is that of Dihydroorotate dehydrogenase (quinone) from Salinispora arenicola (strain CNS-205).